The chain runs to 118 residues: MRVSQRLGRFGEDVAARHLSADGAEILARNWRCRDGEIDIVARHGDTLVFCEVKTRSGADYGSGPDAVVGRKAARIRRLAVRWLAEHPHPPAIIRFDVLSVYRERQGSVRVEHRRGAF.

It belongs to the UPF0102 family.

The protein is UPF0102 protein Franean1_1156 of Parafrankia sp. (strain EAN1pec).